Consider the following 417-residue polypeptide: D-amino acid dehydrogenase (417 aa).

FAD is bound at residue 3-17 (VIVLGSGVIGVTAAW).

Belongs to the DadA oxidoreductase family. The cofactor is FAD.

The enzyme catalyses a D-alpha-amino acid + A + H2O = a 2-oxocarboxylate + AH2 + NH4(+). Its pathway is amino-acid degradation; D-alanine degradation; NH(3) and pyruvate from D-alanine: step 1/1. Oxidative deamination of D-amino acids. The chain is D-amino acid dehydrogenase from Methylobacillus flagellatus (strain ATCC 51484 / DSM 6875 / VKM B-1610 / KT).